Reading from the N-terminus, the 815-residue chain is Leucine--tRNA ligase (815 aa).

The 'HIGH' region signature appears at 42 to 52; it reads PYPSGRLHMGH. A 'KMSKS' region motif is present at residues 571 to 575; the sequence is KMSKS. Lys574 is an ATP binding site.

It belongs to the class-I aminoacyl-tRNA synthetase family.

The protein resides in the cytoplasm. The catalysed reaction is tRNA(Leu) + L-leucine + ATP = L-leucyl-tRNA(Leu) + AMP + diphosphate. The chain is Leucine--tRNA ligase from Vesicomyosocius okutanii subsp. Calyptogena okutanii (strain HA).